The following is a 62-amino-acid chain: Conotoxin Tx5.1 (62 aa).

The first 22 residues, 1-22 (MCCLPVFVILLLLIASAPSVDA), serve as a signal peptide directing secretion. Positions 23 to 49 (QPKTKDDVPLAPLHDNAKSALQHLNQR) are excised as a propeptide. Gln-60 bears the Glutamine amide mark.

It belongs to the conotoxin T superfamily. In terms of processing, contains 2 disulfide bonds that can be either 'C1-C3, C2-C4' or 'C1-C4, C2-C3', since these disulfide connectivities have been observed for conotoxins with cysteine framework V (for examples, see AC P0DQQ7 and AC P81755). As to expression, expressed by the venom duct.

The protein localises to the secreted. In Conus textile (Cloth-of-gold cone), this protein is Conotoxin Tx5.1.